A 409-amino-acid chain; its full sequence is Serine/threonine transporter SstT (409 aa).

Helical transmembrane passes span 24–44 (LALGIVIGSVSPQLGLAAGLF), 48–68 (FVGALKAVAPVLVFILVAATI), 82–102 (IIVLYLIGTFSAALTAVIAGM), 142–162 (AIANANYIGILAWALVLGAAL), 194–214 (LGIFGLVSSTIAETGFGALAG), 218–238 (LLAVLLGCMAFIALAVNPAIV), 292–312 (IPLGATVNMGGAAITITVLAM), 319–339 (GIQVDFATALLLSLVATVSAC), and 365–385 (VAMQVVAVGFIIGVIQDSAET).

This sequence belongs to the dicarboxylate/amino acid:cation symporter (DAACS) (TC 2.A.23) family.

It is found in the cell inner membrane. The catalysed reaction is L-serine(in) + Na(+)(in) = L-serine(out) + Na(+)(out). The enzyme catalyses L-threonine(in) + Na(+)(in) = L-threonine(out) + Na(+)(out). Functionally, involved in the import of serine and threonine into the cell, with the concomitant import of sodium (symport system). The polypeptide is Serine/threonine transporter SstT (Neisseria gonorrhoeae (strain NCCP11945)).